Consider the following 336-residue polypeptide: Holliday junction branch migration complex subunit RuvB (336 aa).

Residues 2–186 (QDQEEERMIT…FGVICKLELY (185 aa)) are large ATPase domain (RuvB-L). ATP is bound by residues L25, R26, G67, K70, T71, T72, 133–135 (EDF), R176, Y186, and R223. T71 provides a ligand contact to Mg(2+). A small ATPAse domain (RuvB-S) region spans residues 187–257 (NNKQLTAIVK…VAEEALILLE (71 aa)). The head domain (RuvB-H) stretch occupies residues 260-336 (SLGLDNTDKK…YEHFNIPSAE (77 aa)). The DNA site is built by R296, R315, and R320.

The protein belongs to the RuvB family. As to quaternary structure, homohexamer. Forms an RuvA(8)-RuvB(12)-Holliday junction (HJ) complex. HJ DNA is sandwiched between 2 RuvA tetramers; dsDNA enters through RuvA and exits via RuvB. An RuvB hexamer assembles on each DNA strand where it exits the tetramer. Each RuvB hexamer is contacted by two RuvA subunits (via domain III) on 2 adjacent RuvB subunits; this complex drives branch migration. In the full resolvosome a probable DNA-RuvA(4)-RuvB(12)-RuvC(2) complex forms which resolves the HJ.

It is found in the cytoplasm. It catalyses the reaction ATP + H2O = ADP + phosphate + H(+). The RuvA-RuvB-RuvC complex processes Holliday junction (HJ) DNA during genetic recombination and DNA repair, while the RuvA-RuvB complex plays an important role in the rescue of blocked DNA replication forks via replication fork reversal (RFR). RuvA specifically binds to HJ cruciform DNA, conferring on it an open structure. The RuvB hexamer acts as an ATP-dependent pump, pulling dsDNA into and through the RuvAB complex. RuvB forms 2 homohexamers on either side of HJ DNA bound by 1 or 2 RuvA tetramers; 4 subunits per hexamer contact DNA at a time. Coordinated motions by a converter formed by DNA-disengaged RuvB subunits stimulates ATP hydrolysis and nucleotide exchange. Immobilization of the converter enables RuvB to convert the ATP-contained energy into a lever motion, pulling 2 nucleotides of DNA out of the RuvA tetramer per ATP hydrolyzed, thus driving DNA branch migration. The RuvB motors rotate together with the DNA substrate, which together with the progressing nucleotide cycle form the mechanistic basis for DNA recombination by continuous HJ branch migration. Branch migration allows RuvC to scan DNA until it finds its consensus sequence, where it cleaves and resolves cruciform DNA. This is Holliday junction branch migration complex subunit RuvB from Alkaliphilus metalliredigens (strain QYMF).